A 141-amino-acid polypeptide reads, in one-letter code: Small ribosomal subunit protein uS9c (141 aa).

This sequence belongs to the universal ribosomal protein uS9 family.

The protein resides in the plastid. It localises to the chloroplast. The chain is Small ribosomal subunit protein uS9c (rps9) from Tupiella akineta (Green alga).